A 761-amino-acid chain; its full sequence is Translation initiation factor IF-2 (761 aa).

A disordered region spans residues 39–179; the sequence is DEETLNKAKQ…KVNHQQMPLP (141 aa). Residues 45-105 are compositionally biased toward low complexity; the sequence is KAKQAGKPAA…NNQQSQSQGQ (61 aa). Residues 106 to 120 are compositionally biased toward polar residues; the sequence is TKRPSQASNNQSGAA. Residues 142–154 are compositionally biased toward low complexity; sequence PGSNNRRPGNNQN. Residues 155-168 are compositionally biased toward basic residues; the sequence is RRNHGNRGGKRRPQ. The region spanning 262-435 is the tr-type G domain; the sequence is ERPPVVTIMG…EVEEFKANPD (174 aa). The tract at residues 271 to 278 is G1; sequence GHVDHGKT. 271-278 serves as a coordination point for GTP; the sequence is GHVDHGKT. The tract at residues 296–300 is G2; that stretch reads GITQH. The tract at residues 317 to 320 is G3; the sequence is DTPG. GTP contacts are provided by residues 317 to 321 and 371 to 374; these read DTPGH and NKID. Residues 371–374 are G4; that stretch reads NKID. Positions 407–409 are G5; that stretch reads SAL.

The protein belongs to the TRAFAC class translation factor GTPase superfamily. Classic translation factor GTPase family. IF-2 subfamily.

It is found in the cytoplasm. One of the essential components for the initiation of protein synthesis. Protects formylmethionyl-tRNA from spontaneous hydrolysis and promotes its binding to the 30S ribosomal subunits. Also involved in the hydrolysis of GTP during the formation of the 70S ribosomal complex. In Shouchella clausii (strain KSM-K16) (Alkalihalobacillus clausii), this protein is Translation initiation factor IF-2.